The sequence spans 747 residues: Ferrichrome outer membrane transporter/phage receptor (747 aa).

The signal sequence occupies residues 1–33 (MARSKTAQPKHSLRKIAVVVATAVSGMSVYAQA). Residues 34 to 192 (AVEPKEDTIT…NMVSKRPTTE (159 aa)) lie on the Periplasmic side of the membrane. Positions 40–47 (DTITVTAA) match the TonB box motif. One can recognise a TBDR plug domain in the interval 75 to 187 (PIQKVPQSIS…PGGLLNMVSK (113 aa)). Ferrichrome is bound by residues Arg114, Gln133, and 148 to 149 (FY). One can recognise a TBDR beta-barrel domain in the interval 192 to 747 (EPLKEVQFKA…QVVATATFRF (556 aa)). The chain crosses the membrane as a beta stranded span at residues 193–201 (PLKEVQFKA). At 202–206 (GTDSL) the chain is on the extracellular side. The beta stranded transmembrane segment at 207 to 215 (FQTGFDFSD) threads the bilayer. The Periplasmic portion of the chain corresponds to 216–222 (SLDDDGV). Residues 223–231 (YSYRLTGLA) form a beta stranded membrane-spanning segment. Residues 232–245 (RSANAQQKGSEEQR) are Extracellular-facing. The beta stranded transmembrane segment at 246–255 (YAIAPAFTWR) threads the bilayer. The Periplasmic segment spans residues 256–259 (PDDK). Residues 260 to 268 (TNFTFLSYF) form a beta stranded membrane-spanning segment. Topologically, residues 269 to 312 (QNEPETGYYGWLPKEGTVEPLPNGKRLPTDFNEGAKNNTYSRNE) are extracellular. Residue 277-279 (YGW) coordinates ferrichrome. The beta stranded transmembrane segment at 313–321 (KMVGYSFDH) threads the bilayer. At 322-326 (EFNDT) the chain is on the periplasmic side. The chain crosses the membrane as a beta stranded span at residues 327–335 (FTVRQNLRF). Over 336-387 (AENKTSQNSVYGYGVCSDPANAYSKQCAALAPADKGHYLARKYVVDDEKLQN) the chain is Extracellular. 346–348 (YGY) lines the ferrichrome pocket. A disulfide bridge links Cys351 with Cys362. The beta stranded transmembrane segment at 388–396 (FSVDTQLQS) threads the bilayer. At 397–404 (KFATGDID) the chain is on the periplasmic side. The beta stranded transmembrane segment at 405 to 413 (HTLLTGVDF) threads the bilayer. At 414-464 (MRMRNDINAWFGYDDSVPLLNLYNPVNTDFDFNAKDPANSGPYRILNKQKQ) the chain is on the extracellular side. Phe424 is a ferrichrome binding site. Residues 465 to 473 (TGVYVQDQA) form a beta stranded membrane-spanning segment. The Periplasmic portion of the chain corresponds to 474–477 (QWDK). A beta stranded transmembrane segment spans residues 478-486 (VLVTLGGRY). Residues 487-508 (DWADQESLNRVAGTTDKRDDKQ) lie on the Extracellular side of the membrane. A beta stranded membrane pass occupies residues 509 to 517 (FTWRGGVNY). The Periplasmic portion of the chain corresponds to 518–522 (LFDNG). The chain crosses the membrane as a beta stranded span at residues 523–531 (VTPYFSYSE). The Extracellular portion of the chain corresponds to 532 to 551 (SFEPSSQVGKDGNIFAPSKG). A beta stranded membrane pass occupies residues 552-560 (KQYEVGVKY). The Periplasmic portion of the chain corresponds to 561–565 (VPEDR). Residues 566–574 (PIVVTGAVY) traverse the membrane as a beta stranded segment. Residues 575–601 (NLTKTNNLMADPEGSFFSVEGGEIRAR) are Extracellular-facing. A beta stranded membrane pass occupies residues 602–610 (GVEIEAKAA). The Periplasmic portion of the chain corresponds to 611-613 (LSA). A beta stranded transmembrane segment spans residues 614–622 (SVNVVGSYT). Residues 623–645 (YTDAEYTTDTTYKGNTPAQVPKH) lie on the Extracellular side of the membrane. A beta stranded membrane pass occupies residues 646 to 654 (MASLWADYT). Topologically, residues 655–661 (FFDGPLS) are periplasmic. A beta stranded transmembrane segment spans residues 662–670 (GLTLGTGGR). Residues 671–689 (YTGSSYGDPANSFKVGSYT) are Extracellular-facing. Residues 690–698 (VVDALVRYD) traverse the membrane as a beta stranded segment. Topologically, residues 699–705 (LARVGMA) are periplasmic. Residues 706-714 (GSNVALHVN) traverse the membrane as a beta stranded segment. Residues 715-737 (NLFDREYVASCFNTYGCFWGAER) are Extracellular-facing. Cys725 and Cys731 are disulfide-bonded. Residues 730 to 747 (GCFWGAERQVVATATFRF) carry the TonB C-terminal box motif. Residue Ala735 participates in ferrichrome binding. A beta stranded transmembrane segment spans residues 738–746 (QVVATATFR). A topological domain (periplasmic) is located at residue Phe747.

It belongs to the TonB-dependent receptor family. As to quaternary structure, monomer. Interacts with TonB. Interacts with Escherichia phage T5 receptor-binding protein pb5 (RBP-pb5); this interaction is necessary for the entry of the viral genome into the host cell.

The protein resides in the cell outer membrane. Its activity is regulated as follows. Binding of ferrichrome or colicin M enhances the interaction between FhuA and TonB. TonB activates FhuA through interaction with the beta-barrel. Involved in the uptake of iron in complex with ferrichrome, a hydroxamate-type siderophore. Binds and transports ferrichrome-iron across the outer membrane. In addition to its role in ferrichrome-iron transport, transports the antibiotic albomycin, which is a structural analog of ferrichrome, and acts as a receptor for colicin M, microcin J25 and bacteriophages T1, T5, phi80 and UC-1. The energy source, which is required for all FhuA functions except infection by phage T5, is provided by the inner membrane TonB system. In Escherichia coli (strain K12), this protein is Ferrichrome outer membrane transporter/phage receptor.